Here is an 834-residue protein sequence, read N- to C-terminus: DNA polymerase I, thermostable (834 aa).

The region spanning 176–262 (KPEQWVDFRA…DLPLEVDLAQ (87 aa)) is the 5'-3' exonuclease domain. The interval 412–834 (ERLHRNLLKR…MGEDWLSAKG (423 aa)) is polymerase.

This sequence belongs to the DNA polymerase type-A family.

The enzyme catalyses DNA(n) + a 2'-deoxyribonucleoside 5'-triphosphate = DNA(n+1) + diphosphate. Functionally, has 5'-3' exonuclease activity and no 3'-5' exonuclease activity. In Thermus caldophilus, this protein is DNA polymerase I, thermostable (polA).